The primary structure comprises 520 residues: Basal body-orientation factor 1 (520 aa).

Basic residues predominate over residues 1–21; the sequence is MPKKKGKGKGKGKGKGKGKKD. Positions 1 to 34 are disordered; the sequence is MPKKKGKGKGKGKGKGKGKKDGKHDSKADRESEI. A compositionally biased stretch (basic and acidic residues) spans 22-34; sequence GKHDSKADRESEI. Coiled coils occupy residues 27–175 and 245–386; these read KADR…REKM and VKEA…RQEA. The segment at 468 to 492 is disordered; sequence AHPPALSASSSEKIQVSSDAGSTVE. The segment covering 469 to 478 has biased composition (low complexity); sequence HPPALSASSS. A compositionally biased stretch (polar residues) spans 479–492; it reads EKIQVSSDAGSTVE.

Belongs to the BBOF1 family.

Its subcellular location is the cytoplasm. The protein resides in the cytoskeleton. The protein localises to the cilium basal body. Functionally, basal body protein required in multiciliate cells to align and maintain cilia orientation in response to flow. May act by mediating a maturation step that stabilizes and aligns cilia orientation. Not required to respond to planar cell polarity (PCP) or flow-based orientation cues. The protein is Basal body-orientation factor 1 of Danio rerio (Zebrafish).